Reading from the N-terminus, the 585-residue chain is MQSSYCPSPYRYTRRVTREVMVGNVGVGGSNPIRIQSMLTSDTRDTDACVKEALELAEAGCEIIRLTAQTKAYAANLENIARELRAAGCHVPLVADIHFKPDAAMEAAKWVEKIRINPGNFVDKKKFEVREYSDAEYREELDRLKEEFTPLVLFCREHGRAMRIGSNHGSLSDRILNRFGDTPEGMVESAIEFAQIARDLDYHSLVFSMKASNVKVMVAAYRLLVERMNALGPDWNYPIHLGVTEAGGGEDGRIKSAVGIGSLLTDGIGDTLRVSLTEDAVREVPVAYRLSNPFQPSERSDDPVSFPEPELSYDPLKFSKRQGGLAMYYGVRLGWEQPVRVAVPDAGFYALQTEREAMGDMMPELSLGQLDAIEVDPRCDADLEPLKELAEPSIVTVKNGLAMEPVYAFRLLAARIEDRHLILLKDTLVPGSVSGEDVPLTAARNIGSLLCDGIGDAVLIQGESDPRLASFLGFNILQATGTRLTRADYVSCPSCGRTLYNIQEATARIRKATEHLKGVKIAVMGCIVNGPGEMADADFGYVGGAPNKINLYVKHTPVKFNIPQEEAVERLVDLIKEYGRWVDPK.

[4Fe-4S] cluster contacts are provided by Cys-492, Cys-495, Cys-526, and Glu-533.

This sequence belongs to the IspG family. The cofactor is [4Fe-4S] cluster.

It carries out the reaction (2E)-4-hydroxy-3-methylbut-2-enyl diphosphate + oxidized [flavodoxin] + H2O + 2 H(+) = 2-C-methyl-D-erythritol 2,4-cyclic diphosphate + reduced [flavodoxin]. It functions in the pathway isoprenoid biosynthesis; isopentenyl diphosphate biosynthesis via DXP pathway; isopentenyl diphosphate from 1-deoxy-D-xylulose 5-phosphate: step 5/6. Functionally, converts 2C-methyl-D-erythritol 2,4-cyclodiphosphate (ME-2,4cPP) into 1-hydroxy-2-methyl-2-(E)-butenyl 4-diphosphate. The polypeptide is 4-hydroxy-3-methylbut-2-en-1-yl diphosphate synthase (flavodoxin) (Akkermansia muciniphila (strain ATCC BAA-835 / DSM 22959 / JCM 33894 / BCRC 81048 / CCUG 64013 / CIP 107961 / Muc)).